A 534-amino-acid polypeptide reads, in one-letter code: MLVLFETSVGYAIFKVLNEKKLQEVDSLWKEFETPEKANKIVKLKHFEKFQDTAEALAAFTALMEGKINKQLKKVLKKIVKEAHEPLAVADAKLGGVIKEKLNLSCIHSPVVNELMRGIRSQMDGLIPGVEPREMAAMCLGLAHSLSRYRLKFSADKVDTMIVQAISLLDDLDKELNNYIMRCREWYGWHFPELGKIISDNLTYCKCLQKVGDRKNYASATLSEFLSEEVEAEVKAAAEISMGTEVSEEDICNILHLCTQVIEISEYRTQLYEYLQNRMMAIAPNVTVMVGELVGARLIAHAGSLLNLAKHAASTVQILGAEKALFRALKSRRDTPKYGLIYHASLVGQTSPKHKGKISRMLAAKTVLAIRYDAFGEDSSSAMGAENRAKLEARLRILEDRGIRKISGTGKALAKAEKYEHKSEVKTYDPSGDSTLPTCSKKRKIEEVDKEDEITEKKAKKAKIKIKAEVEEEMEEAEEEQVVEEEPTVKKKKKKDKKKHIKEEPLSEEEPCTSTAVPSPEKKKKKKKKKDAED.

Thr34 bears the Phosphothreonine mark. Ser109 bears the Phosphoserine mark. Lys157 participates in a covalent cross-link: Glycyl lysine isopeptide (Lys-Gly) (interchain with G-Cter in SUMO2). One can recognise a Nop domain in the interval Ile282–Asp400. Ser304 and Ser351 each carry phosphoserine. Glycyl lysine isopeptide (Lys-Gly) (interchain with G-Cter in SUMO2) cross-links involve residues Lys353, Lys411, Lys415, Lys422, Lys426, Lys441, Lys444, and Lys465. Lys467 is covalently cross-linked (Glycyl lysine isopeptide (Lys-Gly) (interchain with G-Cter in SUMO); alternate). Residue Lys467 forms a Glycyl lysine isopeptide (Lys-Gly) (interchain with G-Cter in SUMO1); alternate linkage. Residue Lys467 forms a Glycyl lysine isopeptide (Lys-Gly) (interchain with G-Cter in SUMO2); alternate linkage. Residues Val470–Glu486 are compositionally biased toward acidic residues. The segment at Val470 to Asp534 is disordered. Lys490 participates in a covalent cross-link: Glycyl lysine isopeptide (Lys-Gly) (interchain with G-Cter in SUMO2). The segment covering Lys490–His500 has biased composition (basic residues). A Glycyl lysine isopeptide (Lys-Gly) (interchain with G-Cter in SUMO); alternate cross-link involves residue Lys502. A Glycyl lysine isopeptide (Lys-Gly) (interchain with G-Cter in SUMO2); alternate cross-link involves residue Lys502. Phosphoserine is present on residues Ser507 and Ser519. The span at Lys522 to Asp534 shows a compositional bias: basic residues.

The protein belongs to the NOP5/NOP56 family. As to quaternary structure, core component of box C/D small nucleolar ribonucleoprotein (snoRNP) particles; the core proteins SNU13, NOP56, NOP58 and FBL or FBLL1 assemble stepwise onto the snoRNA. Interacts with NOLC1/Nopp140. Interacts with NOPCHAP1, NUFIP1, RUVBL1 and RUVBL2; NOPCHAP1 bridges the association of NOP58 with RUVBL1:RUVBL2 and NUFIP1. Interacts with PIH1D1. Part of the small subunit (SSU) processome, composed of more than 70 proteins and the RNA chaperone small nucleolar RNA (snoRNA) U3. Sumoylation is essential for high-affinity binding to snoRNAs.

The protein resides in the nucleus. Its subcellular location is the nucleolus. It is found in the nucleoplasm. Functionally, required for the biogenesis of box C/D snoRNAs such as U3, U8 and U14 snoRNAs. Part of the small subunit (SSU) processome, first precursor of the small eukaryotic ribosomal subunit. During the assembly of the SSU processome in the nucleolus, many ribosome biogenesis factors, an RNA chaperone and ribosomal proteins associate with the nascent pre-rRNA and work in concert to generate RNA folding, modifications, rearrangements and cleavage as well as targeted degradation of pre-ribosomal RNA by the RNA exosome. Core component of box C/D small nucleolar ribonucleoprotein (snoRNP) complexes that function in methylation of multiple sites on ribosomal RNAs (rRNAs) and messenger RNAs (mRNAs). This Rattus norvegicus (Rat) protein is Nucleolar protein 58 (Nop58).